The primary structure comprises 363 residues: NAD(P)H-quinone oxidoreductase subunit 1, chloroplastic (363 aa).

The next 8 helical transmembrane spans lie at 30-50 (LVPI…IVWL), 98-118 (FSIG…VIPF), 127-147 (LSIG…GLLM), 165-185 (AAQS…ISLL), 203-223 (FWGW…ISSL), 248-268 (YSGI…LVSS), 300-320 (VFGT…FLFI), and 336-356 (LLNL…LLTT).

It belongs to the complex I subunit 1 family. As to quaternary structure, NDH is composed of at least 16 different subunits, 5 of which are encoded in the nucleus.

It localises to the plastid. It is found in the chloroplast thylakoid membrane. The enzyme catalyses a plastoquinone + NADH + (n+1) H(+)(in) = a plastoquinol + NAD(+) + n H(+)(out). It carries out the reaction a plastoquinone + NADPH + (n+1) H(+)(in) = a plastoquinol + NADP(+) + n H(+)(out). Functionally, NDH shuttles electrons from NAD(P)H:plastoquinone, via FMN and iron-sulfur (Fe-S) centers, to quinones in the photosynthetic chain and possibly in a chloroplast respiratory chain. The immediate electron acceptor for the enzyme in this species is believed to be plastoquinone. Couples the redox reaction to proton translocation, and thus conserves the redox energy in a proton gradient. This is NAD(P)H-quinone oxidoreductase subunit 1, chloroplastic from Solanum lycopersicum (Tomato).